Consider the following 623-residue polypeptide: Glutathione import ATP-binding protein GsiA (623 aa).

ABC transporter domains follow at residues 15-269 (VENL…RALL) and 314-564 (LRVR…RKLL). Residues 49-56 (GESGSGKS) and 357-364 (GESGSGKS) contribute to the ATP site.

The protein belongs to the ABC transporter superfamily. Glutathione importer (TC 3.A.1.5.11) family. As to quaternary structure, the complex is composed of two ATP-binding proteins (GsiA), two transmembrane proteins (GsiC and GsiD) and a solute-binding protein (GsiB).

The protein localises to the cell inner membrane. It catalyses the reaction glutathione(out) + ATP + H2O = glutathione(in) + ADP + phosphate + H(+). In terms of biological role, part of the ABC transporter complex GsiABCD involved in glutathione import. Responsible for energy coupling to the transport system. This chain is Glutathione import ATP-binding protein GsiA, found in Escherichia coli O157:H7.